The chain runs to 854 residues: Espin (854 aa).

9 ANK repeats span residues 1–31 (MALE…GPSL), 35–64 (LDAL…LPAA), 69–99 (NGAT…RVQD), 103–133 (SGAT…DPTA), 137–167 (MGAL…GVNA), 171–201 (NGAT…DPHA), 205–235 (DGMT…SLSE), 239–268 (DGAT…EISA), and 271–300 (WGGT…ELDV). Residues serine 338 and serine 342 each carry the phosphoserine modification. Over residues 338-349 (SRDPSAELEAKQ) the composition is skewed to basic and acidic residues. Disordered regions lie at residues 338–400 (SRDP…CGLS), 415–474 (NPEL…MQTK), 487–713 (KELS…AGFQ), 765–788 (KMQE…SMPA), and 800–832 (EERE…TLGY). Residues 352–377 (SGMSSPNTTVSVQPLNFDLSSPTSTL) show a composition bias toward polar residues. Residues 378–389 (SNYDSCSSSHSS) show a composition bias toward low complexity. The segment covering 428–463 (PTPPPPPPSFPPPPPPPGTQLPPPPPGYPAPKPPVG) has biased composition (pro residues). Positions 487–505 (KELSSCDGHDGLRRQDSSR) are enriched in basic and acidic residues. Serine 515 bears the Phosphoserine mark. Residues 595–620 (LPPPPPPPPPPLPEAASSPPPAPPLP) show a composition bias toward pro residues. The span at 633–642 (SSSSTGSTKS) shows a compositional bias: low complexity. 2 stretches are compositionally biased toward polar residues: residues 643 to 652 (FNMMSPTGDN) and 667 to 678 (PTPQSKGLTTVF). Position 647 is a phosphoserine (serine 647). One can recognise a WH2 domain in the interval 651–668 (DNSELLAEIKAGKSLKPT). Serine 690 and serine 696 each carry phosphoserine. Residues 692–703 (LPSVSPALSPVR) show a composition bias toward low complexity. Positions 756-830 (QVMVRKMQLK…KEQSEKLRTL (75 aa)) form a coiled coil.

In terms of assembly, monomer. Binds F-actin in a Ca(2+)-resistant fashion. Interacts (via N-terminus) with BAIAP2 (via SH3-domain). Interacts with PFN2. Interacts with MYO3A (via C-terminus). Interacts with MYO3B (via C-terminus).

It localises to the cytoplasm. The protein resides in the cytoskeleton. Its subcellular location is the cell projection. The protein localises to the stereocilium. It is found in the microvillus. Multifunctional actin-bundling protein. Plays a major role in regulating the organization, dimension, dynamics and signaling capacities of the actin filament-rich microvilli in the mechanosensory and chemosensory cells. Required for the assembly and stabilization of the stereociliary parallel actin bundles. Plays a crucial role in the formation and maintenance of inner ear hair cell stereocilia. Involved in the elongation of actin in stereocilia. In extrastriolar hair cells, required for targeting MYO3B to stereocilia tips, and for regulation of stereocilia diameter and staircase formation. The protein is Espin (ESPN) of Homo sapiens (Human).